Consider the following 273-residue polypeptide: MHTRTVFFISDGTGITAETFGNAILAQFDIKPRHVRLPFIDTEDKAHQAVRRINHTAELEGKKPIVFTTLVNMSVLRIIQENCQGMLLDMFGTFIRPLEGELGIKSLHRVGRFADVSLSKEYTDRIEAINFSLDHDDGQSHRDLSGADVILVGVSRSGKTPTSLYLAMQCGLKVANYPLIPEDFERKQLPPALEPHRKKIFGLTILPERLSQIRNERRPGSKYADLANCRHEVAEAEAMMRRSGIRWLSTTTKSIEEIATTILQEVRPERLVY.

Residue 153 to 160 (GVSRSGKT) coordinates ADP.

This sequence belongs to the pyruvate, phosphate/water dikinase regulatory protein family. PSRP subfamily.

The catalysed reaction is [pyruvate, water dikinase] + ADP = [pyruvate, water dikinase]-phosphate + AMP + H(+). It catalyses the reaction [pyruvate, water dikinase]-phosphate + phosphate + H(+) = [pyruvate, water dikinase] + diphosphate. Functionally, bifunctional serine/threonine kinase and phosphorylase involved in the regulation of the phosphoenolpyruvate synthase (PEPS) by catalyzing its phosphorylation/dephosphorylation. The chain is Putative phosphoenolpyruvate synthase regulatory protein from Paracidovorax citrulli (strain AAC00-1) (Acidovorax citrulli).